The following is a 212-amino-acid chain: Large ribosomal subunit protein uL3 (212 aa).

Positions 135 to 156 (MTHGNSRSHRVPGSIGQNQSPG) are disordered. Glutamine 153 carries the post-translational modification N5-methylglutamine.

It belongs to the universal ribosomal protein uL3 family. Part of the 50S ribosomal subunit. Forms a cluster with proteins L14 and L19. In terms of processing, methylated by PrmB.

Its function is as follows. One of the primary rRNA binding proteins, it binds directly near the 3'-end of the 23S rRNA, where it nucleates assembly of the 50S subunit. This is Large ribosomal subunit protein uL3 from Tolumonas auensis (strain DSM 9187 / NBRC 110442 / TA 4).